A 340-amino-acid polypeptide reads, in one-letter code: Dihydroorotate dehydrogenase (quinone) (340 aa).

Residues 61–65 (AGLDK) and Thr85 each bind FMN. Lys65 contributes to the substrate binding site. 110–114 (NRMGF) lines the substrate pocket. FMN is bound by residues Asn138 and Asn171. Residue Asn171 coordinates substrate. Ser174 serves as the catalytic Nucleophile. Asn176 contributes to the substrate binding site. FMN is bound by residues Lys216 and Thr244. Residue 245-246 (NT) participates in substrate binding. Residues Gly267, Gly296, and 317-318 (YT) each bind FMN.

Belongs to the dihydroorotate dehydrogenase family. Type 2 subfamily. As to quaternary structure, monomer. Requires FMN as cofactor.

It is found in the cell membrane. The enzyme catalyses (S)-dihydroorotate + a quinone = orotate + a quinol. It functions in the pathway pyrimidine metabolism; UMP biosynthesis via de novo pathway; orotate from (S)-dihydroorotate (quinone route): step 1/1. Functionally, catalyzes the conversion of dihydroorotate to orotate with quinone as electron acceptor. This is Dihydroorotate dehydrogenase (quinone) from Marinobacter nauticus (strain ATCC 700491 / DSM 11845 / VT8) (Marinobacter aquaeolei).